A 162-amino-acid chain; its full sequence is Cyclic pyranopterin monophosphate synthase (162 aa).

Residues 75 to 77 (MCH) and 115 to 116 (ME) each bind substrate. The active site involves Asp-130.

This sequence belongs to the MoaC family. Homohexamer; trimer of dimers.

It carries out the reaction (8S)-3',8-cyclo-7,8-dihydroguanosine 5'-triphosphate = cyclic pyranopterin phosphate + diphosphate. Its pathway is cofactor biosynthesis; molybdopterin biosynthesis. Catalyzes the conversion of (8S)-3',8-cyclo-7,8-dihydroguanosine 5'-triphosphate to cyclic pyranopterin monophosphate (cPMP). This Geobacillus thermodenitrificans (strain NG80-2) protein is Cyclic pyranopterin monophosphate synthase.